We begin with the raw amino-acid sequence, 136 residues long: Large ribosomal subunit protein uL16 (136 aa).

It belongs to the universal ribosomal protein uL16 family. As to quaternary structure, part of the 50S ribosomal subunit.

In terms of biological role, binds 23S rRNA and is also seen to make contacts with the A and possibly P site tRNAs. The protein is Large ribosomal subunit protein uL16 of Rickettsia peacockii (strain Rustic).